A 95-amino-acid chain; its full sequence is Aspartyl/glutamyl-tRNA(Asn/Gln) amidotransferase subunit C (95 aa).

This sequence belongs to the GatC family. Heterotrimer of A, B and C subunits.

The catalysed reaction is L-glutamyl-tRNA(Gln) + L-glutamine + ATP + H2O = L-glutaminyl-tRNA(Gln) + L-glutamate + ADP + phosphate + H(+). The enzyme catalyses L-aspartyl-tRNA(Asn) + L-glutamine + ATP + H2O = L-asparaginyl-tRNA(Asn) + L-glutamate + ADP + phosphate + 2 H(+). Allows the formation of correctly charged Asn-tRNA(Asn) or Gln-tRNA(Gln) through the transamidation of misacylated Asp-tRNA(Asn) or Glu-tRNA(Gln) in organisms which lack either or both of asparaginyl-tRNA or glutaminyl-tRNA synthetases. The reaction takes place in the presence of glutamine and ATP through an activated phospho-Asp-tRNA(Asn) or phospho-Glu-tRNA(Gln). This is Aspartyl/glutamyl-tRNA(Asn/Gln) amidotransferase subunit C from Chlorobium phaeobacteroides (strain DSM 266 / SMG 266 / 2430).